Here is a 277-residue protein sequence, read N- to C-terminus: NLP effector protein Pc109174 (277 aa).

Positions 1–19 (MNLVPALVLLLALAQTVLG) are cleaved as a signal peptide. Positions 119–125 (KSRHLWA) match the Hepta-peptide GHRHDWE motif motif. N199 carries an N-linked (GlcNAc...) asparagine glycan.

The protein belongs to the Necrosis inducing protein (NPP1) family.

The protein resides in the secreted. Secreted effector that contributes strongly to virulence during infection by P.capsici. Induces cell death in the Solanaceae, including hot pepper. This chain is NLP effector protein Pc109174, found in Phytophthora capsici.